A 154-amino-acid polypeptide reads, in one-letter code: Crossover junction endodeoxyribonuclease RuvC (154 aa).

Residues aspartate 7, glutamate 67, and aspartate 139 contribute to the active site. Residues aspartate 7, glutamate 67, and aspartate 139 each coordinate Mg(2+).

Belongs to the RuvC family. As to quaternary structure, homodimer which binds Holliday junction (HJ) DNA. The HJ becomes 2-fold symmetrical on binding to RuvC with unstacked arms; it has a different conformation from HJ DNA in complex with RuvA. In the full resolvosome a probable DNA-RuvA(4)-RuvB(12)-RuvC(2) complex forms which resolves the HJ. The cofactor is Mg(2+).

It localises to the cytoplasm. It carries out the reaction Endonucleolytic cleavage at a junction such as a reciprocal single-stranded crossover between two homologous DNA duplexes (Holliday junction).. Its function is as follows. The RuvA-RuvB-RuvC complex processes Holliday junction (HJ) DNA during genetic recombination and DNA repair. Endonuclease that resolves HJ intermediates. Cleaves cruciform DNA by making single-stranded nicks across the HJ at symmetrical positions within the homologous arms, yielding a 5'-phosphate and a 3'-hydroxyl group; requires a central core of homology in the junction. The consensus cleavage sequence is 5'-(A/T)TT(C/G)-3'. Cleavage occurs on the 3'-side of the TT dinucleotide at the point of strand exchange. HJ branch migration catalyzed by RuvA-RuvB allows RuvC to scan DNA until it finds its consensus sequence, where it cleaves and resolves the cruciform DNA. This is Crossover junction endodeoxyribonuclease RuvC from Prochlorococcus marinus (strain MIT 9303).